Reading from the N-terminus, the 524-residue chain is BEL1-like homeodomain protein 3 (524 aa).

The segment at 171–187 is SR/KY domain; sequence SRYLKPTQQLLDEVVSV. Basic and acidic residues-rich tracts occupy residues 195-205 and 216-235; these read NKKMKNDKGQD and EDDK…ELQS. The interval 195-236 is disordered; the sequence is NKKMKNDKGQDFHNGSSDNITEDDKSQSQELSPSERQELQSK. The tract at residues 229 to 300 is BELL domain; the sequence is ERQELQSKKS…CLRDAIKEQI (72 aa). The homeobox DNA-binding region spans 346–408; it reads AWRPQRGLPE…NARVRLWKPM (63 aa). The disordered stretch occupies residues 429–463; sequence QDTKKMQETSQLKHEDSSSSQQQNQGNNNNNIPYT. Basic and acidic residues predominate over residues 430-445; it reads DTKKMQETSQLKHEDS. Over residues 446–459 the composition is skewed to low complexity; it reads SSSQQQNQGNNNNN.

It belongs to the TALE/BELL homeobox family. May form heterodimeric complex with the TALE/KNOX protein STM. Interacts with OFP1, OFP2, OFP3, OFP4, OFP5 and OFP15.

It is found in the nucleus. Its function is as follows. Transcription factor that is responsive of the nuclear import of SHOOT MERISTEMLESS (STM). This is BEL1-like homeodomain protein 3 (BLH3) from Arabidopsis thaliana (Mouse-ear cress).